The sequence spans 369 residues: CCA-adding enzyme (369 aa).

Residues glycine 8 and arginine 11 each contribute to the ATP site. Residues glycine 8 and arginine 11 each coordinate CTP. Residues aspartate 21 and aspartate 23 each coordinate Mg(2+). Arginine 91, arginine 137, and arginine 140 together coordinate ATP. Residues arginine 91, arginine 137, and arginine 140 each coordinate CTP.

The protein belongs to the tRNA nucleotidyltransferase/poly(A) polymerase family. Bacterial CCA-adding enzyme type 2 subfamily. Requires Mg(2+) as cofactor.

The enzyme catalyses a tRNA precursor + 2 CTP + ATP = a tRNA with a 3' CCA end + 3 diphosphate. It catalyses the reaction a tRNA with a 3' CCA end + 2 CTP + ATP = a tRNA with a 3' CCACCA end + 3 diphosphate. In terms of biological role, catalyzes the addition and repair of the essential 3'-terminal CCA sequence in tRNAs without using a nucleic acid template. Adds these three nucleotides in the order of C, C, and A to the tRNA nucleotide-73, using CTP and ATP as substrates and producing inorganic pyrophosphate. tRNA 3'-terminal CCA addition is required both for tRNA processing and repair. Also involved in tRNA surveillance by mediating tandem CCA addition to generate a CCACCA at the 3' terminus of unstable tRNAs. While stable tRNAs receive only 3'-terminal CCA, unstable tRNAs are marked with CCACCA and rapidly degraded. This Francisella tularensis subsp. novicida (strain U112) protein is CCA-adding enzyme.